Consider the following 344-residue polypeptide: Anthranilate phosphoribosyltransferase (344 aa).

5-phospho-alpha-D-ribose 1-diphosphate is bound by residues glycine 81, 84 to 85, serine 89, 91 to 94, 109 to 117, and alanine 121; these read GD, NIST, and KHGNRALSS. Glycine 81 serves as a coordination point for anthranilate. A Mg(2+)-binding site is contributed by serine 93. An anthranilate-binding site is contributed by asparagine 112. Residue arginine 167 participates in anthranilate binding. The Mg(2+) site is built by aspartate 226 and glutamate 227.

This sequence belongs to the anthranilate phosphoribosyltransferase family. Homodimer. It depends on Mg(2+) as a cofactor.

It catalyses the reaction N-(5-phospho-beta-D-ribosyl)anthranilate + diphosphate = 5-phospho-alpha-D-ribose 1-diphosphate + anthranilate. The protein operates within amino-acid biosynthesis; L-tryptophan biosynthesis; L-tryptophan from chorismate: step 2/5. Catalyzes the transfer of the phosphoribosyl group of 5-phosphorylribose-1-pyrophosphate (PRPP) to anthranilate to yield N-(5'-phosphoribosyl)-anthranilate (PRA). This is Anthranilate phosphoribosyltransferase from Azorhizobium caulinodans (strain ATCC 43989 / DSM 5975 / JCM 20966 / LMG 6465 / NBRC 14845 / NCIMB 13405 / ORS 571).